Reading from the N-terminus, the 495-residue chain is Glycerol kinase (495 aa).

An ADP-binding site is contributed by Thr-14. ATP contacts are provided by Thr-14, Thr-15, and Ser-16. Position 14 (Thr-14) interacts with sn-glycerol 3-phosphate. Arg-18 provides a ligand contact to ADP. 4 residues coordinate sn-glycerol 3-phosphate: Arg-84, Glu-85, Tyr-136, and Asp-246. Residues Arg-84, Glu-85, Tyr-136, Asp-246, and Gln-247 each contribute to the glycerol site. 2 residues coordinate ADP: Thr-268 and Gly-312. Residues Thr-268, Gly-312, Gln-316, and Gly-413 each contribute to the ATP site. Residues Gly-413 and Asn-417 each contribute to the ADP site.

Belongs to the FGGY kinase family.

The catalysed reaction is glycerol + ATP = sn-glycerol 3-phosphate + ADP + H(+). The protein operates within polyol metabolism; glycerol degradation via glycerol kinase pathway; sn-glycerol 3-phosphate from glycerol: step 1/1. With respect to regulation, inhibited by fructose 1,6-bisphosphate (FBP). In terms of biological role, key enzyme in the regulation of glycerol uptake and metabolism. Catalyzes the phosphorylation of glycerol to yield sn-glycerol 3-phosphate. In Bdellovibrio bacteriovorus (strain ATCC 15356 / DSM 50701 / NCIMB 9529 / HD100), this protein is Glycerol kinase.